The primary structure comprises 428 residues: Enolase (428 aa).

Gln-163 lines the (2R)-2-phosphoglycerate pocket. Glu-205 acts as the Proton donor in catalysis. Mg(2+)-binding residues include Asp-242, Glu-285, and Asp-312. (2R)-2-phosphoglycerate-binding residues include Lys-337, Arg-366, Ser-367, and Lys-388. Residue Lys-337 is the Proton acceptor of the active site.

The protein belongs to the enolase family. Requires Mg(2+) as cofactor.

It is found in the cytoplasm. Its subcellular location is the secreted. The protein localises to the cell surface. The catalysed reaction is (2R)-2-phosphoglycerate = phosphoenolpyruvate + H2O. It functions in the pathway carbohydrate degradation; glycolysis; pyruvate from D-glyceraldehyde 3-phosphate: step 4/5. Catalyzes the reversible conversion of 2-phosphoglycerate (2-PG) into phosphoenolpyruvate (PEP). It is essential for the degradation of carbohydrates via glycolysis. In Erythrobacter litoralis (strain HTCC2594), this protein is Enolase.